A 66-amino-acid chain; its full sequence is MTTSASDRPEAGVDRKLLDILVCPITKGPLEFDAARQELISRGAKLAYPIRDGIPIMLPEEARKLG.

Belongs to the UPF0434 family.

The polypeptide is UPF0434 protein RPC_0266 (Rhodopseudomonas palustris (strain BisB18)).